A 198-amino-acid polypeptide reads, in one-letter code: Recombination protein RecR (198 aa).

The C4-type zinc finger occupies 57–72; sequence CSVCCNLTDQDPCQIC. Residues 80-175 form the Toprim domain; it reads STICVVQEPR…KVTRIARGLP (96 aa).

This sequence belongs to the RecR family.

May play a role in DNA repair. It seems to be involved in an RecBC-independent recombinational process of DNA repair. It may act with RecF and RecO. The polypeptide is Recombination protein RecR (Symbiobacterium thermophilum (strain DSM 24528 / JCM 14929 / IAM 14863 / T)).